The following is a 190-amino-acid chain: Probable molybdenum cofactor guanylyltransferase (190 aa).

GTP is bound by residues 9–11 (LCG), Lys21, Asp65, and Asp94. Position 94 (Asp94) interacts with Mg(2+).

Belongs to the MobA family. It depends on Mg(2+) as a cofactor.

The protein localises to the cytoplasm. It catalyses the reaction Mo-molybdopterin + GTP + H(+) = Mo-molybdopterin guanine dinucleotide + diphosphate. Functionally, transfers a GMP moiety from GTP to Mo-molybdopterin (Mo-MPT) cofactor (Moco or molybdenum cofactor) to form Mo-molybdopterin guanine dinucleotide (Mo-MGD) cofactor. The polypeptide is Probable molybdenum cofactor guanylyltransferase (Flavobacterium johnsoniae (strain ATCC 17061 / DSM 2064 / JCM 8514 / BCRC 14874 / CCUG 350202 / NBRC 14942 / NCIMB 11054 / UW101) (Cytophaga johnsonae)).